We begin with the raw amino-acid sequence, 351 residues long: Cell shape-determining protein MreB (351 aa).

ATP contacts are provided by residues 20-22 (TAN), 169-171 (GGT), 217-220 (ERIK), and 299-302 (GGAL).

This sequence belongs to the FtsA/MreB family. As to quaternary structure, forms polymers.

The protein localises to the cytoplasm. Forms membrane-associated dynamic filaments that are essential for cell shape determination. Acts by regulating cell wall synthesis and cell elongation, and thus cell shape. A feedback loop between cell geometry and MreB localization may maintain elongated cell shape by targeting cell wall growth to regions of negative cell wall curvature. This chain is Cell shape-determining protein MreB, found in Haemophilus influenzae (strain ATCC 51907 / DSM 11121 / KW20 / Rd).